A 745-amino-acid polypeptide reads, in one-letter code: Cellulose synthase-like protein E2 (745 aa).

A compositionally biased stretch (gly residues) spans 1-14; the sequence is MAGSGGGVVSGGRQ. Positions 1–20 are disordered; that stretch reads MAGSGGGVVSGGRQRGPPLF. The next 2 helical transmembrane spans lie at 29–49 and 66–86; these read AMAAYRVSAATVFAGVLLIWL and WAWLGMLAAELWFGFYWVLTL. Residues aspartate 155 and aspartate 458 contribute to the active site. The next 5 helical transmembrane spans lie at 541–561, 568–588, 658–678, 686–706, and 723–743; these read FPTLYYVTIPSLCFLNGISLF, WFIPFAYVMVAAYSCSLAESL, AMFVILTTVALLNLACMVLGI, GPGGLETLFLQAVLCVLIVAI, and LPASVARVSICFVLPLCILSI.

This sequence belongs to the glycosyltransferase 2 family. Plant cellulose synthase-like E subfamily.

The protein localises to the golgi apparatus membrane. Thought to be a Golgi-localized beta-glycan synthase that polymerize the backbones of noncellulosic polysaccharides (hemicelluloses) of plant cell wall. This chain is Cellulose synthase-like protein E2 (CSLE2), found in Oryza sativa subsp. japonica (Rice).